Reading from the N-terminus, the 248-residue chain is Proteasome subunit alpha type-7 (248 aa).

An O-linked (GlcNAc) serine glycan is attached at S130. A Phosphotyrosine modification is found at Y153.

The protein belongs to the peptidase T1A family. As to quaternary structure, the 26S proteasome consists of a 20S proteasome core and two 19S regulatory subunits. The 20S proteasome core is a barrel-shaped complex made of 28 subunits that are arranged in four stacked rings. The two outer rings are each formed by seven alpha subunits, and the two inner rings are formed by seven beta subunits. The proteolytic activity is exerted by three beta-subunits PSMB5, PSMB6 and PSMB7. PSMA7 interacts directly with the PSMG1-PSMG2 heterodimer which promotes 20S proteasome assembly. Interacts with HIF1A. Interacts with RAB7A. Interacts with PRKN. Interacts with ABL1 and ABL2. Interacts with EMAP2. Interacts with MAVS.

The protein resides in the cytoplasm. It is found in the nucleus. Component of the 20S core proteasome complex involved in the proteolytic degradation of most intracellular proteins. This complex plays numerous essential roles within the cell by associating with different regulatory particles. Associated with two 19S regulatory particles, forms the 26S proteasome and thus participates in the ATP-dependent degradation of ubiquitinated proteins. The 26S proteasome plays a key role in the maintenance of protein homeostasis by removing misfolded or damaged proteins that could impair cellular functions, and by removing proteins whose functions are no longer required. Associated with the PA200 or PA28, the 20S proteasome mediates ubiquitin-independent protein degradation. This type of proteolysis is required in several pathways including spermatogenesis (20S-PA200 complex) or generation of a subset of MHC class I-presented antigenic peptides (20S-PA28 complex). Inhibits the transactivation function of HIF-1A under both normoxic and hypoxia-mimicking conditions. The interaction with EMAP2 increases the proteasome-mediated HIF-1A degradation under the hypoxic conditions. Plays a role in hepatitis C virus internal ribosome entry site-mediated translation. Mediates nuclear translocation of the androgen receptor (AR) and thereby enhances androgen-mediated transactivation. Promotes MAVS degradation and thereby negatively regulates MAVS-mediated innate immune response. The protein is Proteasome subunit alpha type-7 (PSMA7) of Pongo abelii (Sumatran orangutan).